The chain runs to 151 residues: MAQTIYVLNGPNLNLLGTREPEIYGRATLADVEKLCAETAAGFGLIAVCRQSNHEGQLIDWIHQARSEKVAGLVINAGGYTHTSIALHDALVGVQIPTVEVHVSNVFAREDFRHHSFIAKAAFASLCGFGIDGYRLAITGLAAKLGASATA.

The Proton acceptor role is filled by Tyr-24. Asn-76, His-82, and Asp-89 together coordinate substrate. Residue His-102 is the Proton donor of the active site. Substrate is bound by residues 103–104 (VS) and Arg-113.

This sequence belongs to the type-II 3-dehydroquinase family. In terms of assembly, homododecamer.

It carries out the reaction 3-dehydroquinate = 3-dehydroshikimate + H2O. Its pathway is metabolic intermediate biosynthesis; chorismate biosynthesis; chorismate from D-erythrose 4-phosphate and phosphoenolpyruvate: step 3/7. Its function is as follows. Catalyzes a trans-dehydration via an enolate intermediate. The polypeptide is 3-dehydroquinate dehydratase (Rhodopseudomonas palustris (strain ATCC BAA-98 / CGA009)).